The sequence spans 195 residues: Protein lin-28 homolog A (195 aa).

The CSD domain occupies 33 to 106 (QGSGVCKWFN…GLESTRVTGP (74 aa)). Positions 98-126 (LESTRVTGPGGAPCIGSERRPKVKGQQKR) are disordered. The flexible linker stretch occupies residues 107–130 (GGAPCIGSERRPKVKGQQKRRQKG). 2 consecutive CCHC-type zinc fingers follow at residues 131–148 (DRCYNCGGLDHHAKECKL) and 153–170 (KKCHFCQSPNHMVAQCPA). The Zn(2+) site is built by cysteine 133, cysteine 136, histidine 141, cysteine 146, cysteine 155, cysteine 158, histidine 163, and cysteine 168. The segment at 175–195 (AANLEEQPISEEQELIPETME) is disordered. Residues 182-195 (PISEEQELIPETME) show a composition bias toward acidic residues.

This sequence belongs to the lin-28 family. In terms of assembly, monomer.

It localises to the cytoplasm. The protein resides in the rough endoplasmic reticulum. Its subcellular location is the P-body. The protein localises to the stress granule. It is found in the nucleus. It localises to the nucleolus. Its function is as follows. RNA-binding protein that inhibits processing of pre-let-7 miRNAs and regulates translation of mRNAs that control developmental timing, pluripotency and metabolism. Seems to recognize a common structural G-quartet (G4) feature in its miRNA and mRNA targets. 'Translational enhancer' that drives specific mRNAs to polysomes and increases the efficiency of protein synthesis. Its association with the translational machinery and target mRNAs results in an increased number of initiation events per molecule of mRNA and, indirectly, in mRNA stabilization. Suppressor of microRNA (miRNA) biogenesis, including that of let-7. Binds specific target miRNA precursors (pre-miRNAs), recognizing an 5'-GGAG-3' motif found in their terminal loop, and recruits uridylyltransferase. This results in the terminal uridylation of target pre-miRNAs. Uridylated pre-miRNAs fail to be processed by Dicer and undergo degradation. Localized to the periendoplasmic reticulum area, binds to a large number of spliced mRNAs and inhibits the translation of mRNAs destined for the ER, reducing the synthesis of transmembrane proteins, ER or Golgi lumen proteins, and secretory proteins. Binds to and enhances the translation of mRNAs for several metabolic enzymes, increasing glycolysis and oxidative phosphorylation. Which, with the let-7 repression may enhance tissue repair in adult tissue. In Xenopus tropicalis (Western clawed frog), this protein is Protein lin-28 homolog A (lin28a).